The chain runs to 301 residues: Ribosomal RNA small subunit methyltransferase A (301 aa).

S-adenosyl-L-methionine-binding residues include asparagine 23, isoleucine 25, glycine 50, glutamate 72, aspartate 97, and asparagine 149.

This sequence belongs to the class I-like SAM-binding methyltransferase superfamily. rRNA adenine N(6)-methyltransferase family. RsmA subfamily.

Its subcellular location is the cytoplasm. It catalyses the reaction adenosine(1518)/adenosine(1519) in 16S rRNA + 4 S-adenosyl-L-methionine = N(6)-dimethyladenosine(1518)/N(6)-dimethyladenosine(1519) in 16S rRNA + 4 S-adenosyl-L-homocysteine + 4 H(+). Specifically dimethylates two adjacent adenosines (A1518 and A1519) in the loop of a conserved hairpin near the 3'-end of 16S rRNA in the 30S particle. May play a critical role in biogenesis of 30S subunits. This Rickettsia peacockii (strain Rustic) protein is Ribosomal RNA small subunit methyltransferase A.